A 363-amino-acid polypeptide reads, in one-letter code: Pyrimidine monooxygenase RutA (363 aa).

Residues 49–50, N115, E124, 140–141, and S190 contribute to the FMN site; these read IK and RY.

Belongs to the NtaA/SnaA/DszA monooxygenase family. RutA subfamily.

The catalysed reaction is uracil + FMNH2 + NADH + O2 = (Z)-3-ureidoacrylate + FMN + NAD(+) + H2O + H(+). It catalyses the reaction thymine + FMNH2 + NADH + O2 = (Z)-2-methylureidoacrylate + FMN + NAD(+) + H2O + H(+). Its function is as follows. Catalyzes the pyrimidine ring opening between N-3 and C-4 by an unusual flavin hydroperoxide-catalyzed mechanism, adding oxygen atoms in the process to yield ureidoacrylate peracid, that immediately reacts with FMN forming ureidoacrylate and FMN-N(5)-oxide. The FMN-N(5)-oxide reacts spontaneously with NADH to produce FMN. Requires the flavin reductase RutF to regenerate FMN in vivo. This is Pyrimidine monooxygenase RutA from Escherichia coli (strain SMS-3-5 / SECEC).